We begin with the raw amino-acid sequence, 86 residues long: Small ribosomal subunit protein uS17 (86 aa).

It belongs to the universal ribosomal protein uS17 family. In terms of assembly, part of the 30S ribosomal subunit.

One of the primary rRNA binding proteins, it binds specifically to the 5'-end of 16S ribosomal RNA. The polypeptide is Small ribosomal subunit protein uS17 (Rhizorhabdus wittichii (strain DSM 6014 / CCUG 31198 / JCM 15750 / NBRC 105917 / EY 4224 / RW1) (Sphingomonas wittichii)).